The sequence spans 657 residues: Pentatricopeptide repeat-containing protein At2g37310 (657 aa).

PPR repeat units follow at residues 21–55 (DGGAYGHLIQHFTRHRLPLHVLQLHARIVVFSIKP), 56–86 (DNFLASKLISFYTRQDRFRQALHVFDEITVR), 87–121 (NAFSYNALLIAYTSREMYFDAFSLFLSWIGSSCYS), 128–165 (DSISISCVLKALSGCDDFWLGSLARQVHGFVIRGGFDS), 166–196 (DVFVGNGMITYYTKCDNIESARKVFDEMSER), 197–232 (DVVSWNSMISGYSQSGSFEDCKKMYKAMLACSDFKP), 233–267 (NGVTVISVFQACGQSSDLIFGLEVHKKMIENHIQM), 268–298 (DLSLCNAVIGFYAKCGSLDYARALFDEMSEK), 299–333 (DSVTYGAIISGYMAHGLVKEAMALFSEMESIGLST), 334–364 (WNAMISGLMQNNHHEEVINSFREMIRCGSRP), 365–399 (NTVTLSSLLPSLTYSSNLKGGKEIHAFAIRNGADN), 400–430 (NIYVTTSIIDNYAKLGFLLGAQRVFDNCKDR), 431–465 (SLIAWTAIITAYAVHGDSDSACSLFDQMQCLGTKP), 466–501 (DDVTLTAVLSAFAHSGDSDMAQHIFDSMLTKYDIEP), and 502–536 (GVEHYACMVSVLSRAGKLSDAMEFISKMPIDPIAK). A type E motif region spans residues 537 to 612 (VWGALLNGAS…IPGTSWIETE (76 aa)). The type E(+) motif stretch occupies residues 613–643 (KGLRSFIAKDSSCERSKEMYEIIEGLVESMS).

The protein belongs to the PPR family. PCMP-E subfamily.

The sequence is that of Pentatricopeptide repeat-containing protein At2g37310 (PCMP-E49) from Arabidopsis thaliana (Mouse-ear cress).